A 312-amino-acid chain; its full sequence is Glyoxylate/hydroxypyruvate reductase A (312 aa).

Arginine 227 is a catalytic residue. Histidine 275 functions as the Proton donor in the catalytic mechanism.

The protein belongs to the D-isomer specific 2-hydroxyacid dehydrogenase family. GhrA subfamily.

Its subcellular location is the cytoplasm. It catalyses the reaction glycolate + NADP(+) = glyoxylate + NADPH + H(+). It carries out the reaction (R)-glycerate + NAD(+) = 3-hydroxypyruvate + NADH + H(+). The catalysed reaction is (R)-glycerate + NADP(+) = 3-hydroxypyruvate + NADPH + H(+). In terms of biological role, catalyzes the NADPH-dependent reduction of glyoxylate and hydroxypyruvate into glycolate and glycerate, respectively. Inactive towards 2-oxo-D-gluconate, 2-oxoglutarate, oxaloacetate and pyruvate. Only D- and L-glycerate are involved in the oxidative activity with NADP. Activity with NAD is very low. This Escherichia coli (strain K12) protein is Glyoxylate/hydroxypyruvate reductase A (ghrA).